The sequence spans 266 residues: Glutamate racemase (266 aa).

Substrate-binding positions include 9 to 10 (DS) and 41 to 42 (YG). Cys73 serves as the catalytic Proton donor/acceptor. 74–75 (NT) is a binding site for substrate. Catalysis depends on Cys183, which acts as the Proton donor/acceptor. 184–185 (TH) contacts substrate.

It belongs to the aspartate/glutamate racemases family.

It carries out the reaction L-glutamate = D-glutamate. It functions in the pathway cell wall biogenesis; peptidoglycan biosynthesis. Functionally, provides the (R)-glutamate required for cell wall biosynthesis. The protein is Glutamate racemase of Shewanella woodyi (strain ATCC 51908 / MS32).